Reading from the N-terminus, the 322-residue chain is Probable 5-dehydro-4-deoxyglucarate dehydratase 2 (322 aa).

The protein belongs to the DapA family.

The catalysed reaction is 5-dehydro-4-deoxy-D-glucarate + H(+) = 2,5-dioxopentanoate + CO2 + H2O. It functions in the pathway carbohydrate acid metabolism; D-glucarate degradation; 2,5-dioxopentanoate from D-glucarate: step 2/2. The polypeptide is Probable 5-dehydro-4-deoxyglucarate dehydratase 2 (Streptomyces coelicolor (strain ATCC BAA-471 / A3(2) / M145)).